The primary structure comprises 354 residues: MRLEKEKELKSILKLLAPGTQLREGLENILRAKTGGLIVLGDSEQILKVVDGGFAINSEYSPSYIYELAKMDGAIILSSDLKKILYANTQLIPDSTIPTFETGTRHRTADRVAKQTGVIVIAISQRRNVITVYRGHIKYVLRDSSVMLGRANQALQTLEKYVAVLDRVVNNLNILEFQDIVTLFDVMTAIQRTEMVMRIVSEIEIYICELGNEGRLISMQLNELIKSVERDGIFMIRDYCQTDMDYDEIYRQIQEISSDDVLNLDFISRAMGYVGVPLVDTLISPRGYRMLSKIPRIPATVMDNLVKNFKELKEIMEASYEDLDRVEGIGEARARAIKNGLRRLREQIMIDNKF.

The DAC domain maps to 6–144; it reads EKELKSILKL…GHIKYVLRDS (139 aa). ATP contacts are provided by residues G73, L91, and 104 to 108; that span reads TRHRT.

This sequence belongs to the DisA family. Homooctamer. Mg(2+) serves as cofactor.

It catalyses the reaction 2 ATP = 3',3'-c-di-AMP + 2 diphosphate. Participates in a DNA-damage check-point that is active prior to asymmetric division when DNA is damaged. DisA forms globular foci that rapidly scan along the chromosomes during sporulation, searching for lesions. When a lesion is present, DisA pauses at the lesion site. This triggers a cellular response that culminates in a temporary block in sporulation initiation. Its function is as follows. Also has diadenylate cyclase activity, catalyzing the condensation of 2 ATP molecules into cyclic di-AMP (c-di-AMP). c-di-AMP acts as a signaling molecule that couples DNA integrity with progression of sporulation. The rise in c-di-AMP level generated by DisA while scanning the chromosome, operates as a positive signal that advances sporulation; upon encountering a lesion, the DisA focus arrests at the damaged site and halts c-di-AMP synthesis. This chain is DNA integrity scanning protein DisA, found in Clostridium kluyveri (strain ATCC 8527 / DSM 555 / NBRC 12016 / NCIMB 10680 / K1).